A 338-amino-acid polypeptide reads, in one-letter code: Lipoate-protein ligase A (338 aa).

The region spanning 29 to 216 (PATQRVLFLW…AFFAYYGERV (188 aa)) is the BPL/LPL catalytic domain. ATP-binding positions include Arg-71, 76–79 (GAVF), and Lys-134. Lys-134 contacts (R)-lipoate.

This sequence belongs to the LplA family. Monomer.

The protein resides in the cytoplasm. It carries out the reaction L-lysyl-[lipoyl-carrier protein] + (R)-lipoate + ATP = N(6)-[(R)-lipoyl]-L-lysyl-[lipoyl-carrier protein] + AMP + diphosphate + H(+). Its pathway is protein modification; protein lipoylation via exogenous pathway; protein N(6)-(lipoyl)lysine from lipoate: step 1/2. It functions in the pathway protein modification; protein lipoylation via exogenous pathway; protein N(6)-(lipoyl)lysine from lipoate: step 2/2. Catalyzes both the ATP-dependent activation of exogenously supplied lipoate to lipoyl-AMP and the transfer of the activated lipoyl onto the lipoyl domains of lipoate-dependent enzymes. The chain is Lipoate-protein ligase A from Cronobacter sakazakii (strain ATCC BAA-894) (Enterobacter sakazakii).